A 647-amino-acid chain; its full sequence is Nucleoside triphosphatase I (647 aa).

Positions 48-212 (FIGLKNLNSM…NNLIGLLRPN (165 aa)) constitute a Helicase ATP-binding domain. 61 to 68 (WDTGTGKT) is an ATP binding site. A DEXH box motif is present at residues 150 to 153 (DEVH). The Helicase C-terminal domain maps to 378–541 (YIEACRIILN…KINVVFDLLK (164 aa)). Positions 467 to 533 (DIIILDMPWN…DIIKNKQGKI (67 aa)) are binding to the cap-specific mRNA (nucleoside-2'-O-)-methyltransferase.

It belongs to the helicase family. NPH I subfamily. As to quaternary structure, monomer. Interacts (via C-terminus) with RAP94 (via N-terminus). Interacts with the cap-specific mRNA (nucleoside-2'-O-)-methyltransferase.

It is found in the virion. The catalysed reaction is a ribonucleoside 5'-triphosphate + H2O = a ribonucleoside 5'-diphosphate + phosphate + H(+). DNA-dependent ATPase required for providing the needed energy to achieve the termination of early transcripts. Acts in concert with the RAP94 subunit of the virion RNA polymerase and the capping enzyme/VTF to catalyze release of UUUUUNU-containing nascent RNA from the elongation complex. NPH-I must bind ssDNA in order to exhibit ATPase activity. This is Nucleoside triphosphatase I (NPH1) from Choristoneura fumiferana (Spruce budworm moth).